The sequence spans 121 residues: Basic phospholipase A2 CoaTx-II (121 aa).

Disulfide bonds link Cys-26/Cys-115, Cys-28/Cys-44, Cys-43/Cys-95, Cys-49/Cys-121, Cys-50/Cys-88, Cys-57/Cys-81, and Cys-75/Cys-86. The segment at 105–117 (KKYRIYPKFLCKK) is important for membrane-damaging activities in eukaryotes and bacteria; heparin-binding.

This sequence belongs to the phospholipase A2 family. Group II subfamily. K49 sub-subfamily. In terms of assembly, homodimer; non-covalently-linked. As to expression, expressed by the venom gland.

It localises to the secreted. Its function is as follows. Snake venom phospholipase A2 (PLA2) that lacks enzymatic inactivity. It shows antibacterial activity against both Gram-negative and Gram-positive bacteria, including methicillin-resistant strains. In vivo, it causes local muscular damage, but no systemic damage (intravenous administration does not elevate plasma creatine kinase). Also causes an inflammatory activity that is demonstrated by mice paw edema induction and pro-inflammatory cytokine IL-6 elevation. A model of myotoxic mechanism has been proposed: an apo Lys49-PLA2 is activated by the entrance of a hydrophobic molecule (e.g. fatty acid) at the hydrophobic channel of the protein leading to a reorientation of a monomer. This reorientation causes a transition between 'inactive' to 'active' states, causing alignment of C-terminal and membrane-docking sites (MDoS) side-by-side and putting the membrane-disruption sites (MDiS) in the same plane, exposed to solvent and in a symmetric position for both monomers. The MDoS region stabilizes the toxin on membrane by the interaction of charged residues with phospholipid head groups. Subsequently, the MDiS region destabilizes the membrane with penetration of hydrophobic residues. This insertion causes a disorganization of the membrane, allowing an uncontrolled influx of ions (i.e. calcium and sodium), and eventually triggering irreversible intracellular alterations and cell death. The polypeptide is Basic phospholipase A2 CoaTx-II (Crotalus lutosus abyssus (Grand Canyon rattlesnake)).